The chain runs to 488 residues: Arginine biosynthesis bifunctional protein ArgJ, mitochondrial (488 aa).

Substrate-binding residues include T227, K250, T261, E340, N483, and S488. T261 (nucleophile) is an active-site residue.

This sequence belongs to the ArgJ family. Heterodimer of an alpha and a beta chain. In terms of processing, the alpha and beta chains are autoproteolytically processed from a single precursor protein within the mitochondrion.

It localises to the mitochondrion matrix. It carries out the reaction N(2)-acetyl-L-ornithine + L-glutamate = N-acetyl-L-glutamate + L-ornithine. The enzyme catalyses L-glutamate + acetyl-CoA = N-acetyl-L-glutamate + CoA + H(+). Its pathway is amino-acid biosynthesis; L-arginine biosynthesis; L-ornithine and N-acetyl-L-glutamate from L-glutamate and N(2)-acetyl-L-ornithine (cyclic): step 1/1. It participates in amino-acid biosynthesis; L-arginine biosynthesis; N(2)-acetyl-L-ornithine from L-glutamate: step 1/4. In terms of biological role, catalyzes two activities which are involved in the cyclic version of arginine biosynthesis: the synthesis of acetylglutamate from glutamate and acetyl-CoA, and of ornithine by transacetylation between acetylornithine and glutamate. The polypeptide is Arginine biosynthesis bifunctional protein ArgJ, mitochondrial (Thalassiosira pseudonana (Marine diatom)).